Consider the following 355-residue polypeptide: Peptide chain release factor 1 (355 aa).

Residue Gln-231 is modified to N5-methylglutamine. The segment covering Leu-283–Ser-292 has biased composition (basic and acidic residues). Residues Leu-283–Tyr-306 are disordered.

Belongs to the prokaryotic/mitochondrial release factor family. Post-translationally, methylated by PrmC. Methylation increases the termination efficiency of RF1.

The protein localises to the cytoplasm. Functionally, peptide chain release factor 1 directs the termination of translation in response to the peptide chain termination codons UAG and UAA. The polypeptide is Peptide chain release factor 1 (Campylobacter concisus (strain 13826)).